The sequence spans 481 residues: Glycogen synthase (481 aa).

Lys-15 contributes to the ADP-alpha-D-glucose binding site.

It belongs to the glycosyltransferase 1 family. Bacterial/plant glycogen synthase subfamily.

It carries out the reaction [(1-&gt;4)-alpha-D-glucosyl](n) + ADP-alpha-D-glucose = [(1-&gt;4)-alpha-D-glucosyl](n+1) + ADP + H(+). The protein operates within glycan biosynthesis; glycogen biosynthesis. Synthesizes alpha-1,4-glucan chains using ADP-glucose. This chain is Glycogen synthase, found in Mesorhizobium japonicum (strain LMG 29417 / CECT 9101 / MAFF 303099) (Mesorhizobium loti (strain MAFF 303099)).